Here is a 165-residue protein sequence, read N- to C-terminus: Probable calcium-binding protein CML18 (165 aa).

4 consecutive EF-hand domains span residues 16 to 51 (EQLA…LGLK), 52 to 87 (PSQD…DLVK), 90 to 125 (YTDD…LGHA), and 126 to 161 (LTAE…AAFD). Residues D29, N31, D33, S35, E40, D65, N67, N69, E76, D103, D105, N107, Y109, E114, D139, D141, D143, C145, and E150 each coordinate Ca(2+).

As to quaternary structure, calcium and pH-dependent interaction with NHX1 (increases when pH decreases, better at pH 5.5 than at pH 7.5). Also interacts with the CPB protein At2g18750.

It is found in the vacuole. Potential calcium sensor that modulates ion selectivity of NHX1. The sequence is that of Probable calcium-binding protein CML18 (CML18) from Arabidopsis thaliana (Mouse-ear cress).